The sequence spans 226 residues: Amelogenin (226 aa).

The first 16 residues, 1–16, serve as a signal peptide directing secretion; sequence MGTWILFACLLGTAFA. Ser32 is modified (phosphoserine). Positions 86-196 are disordered; sequence QQHPPSHTTL…LPPQQALPPM (111 aa). Composition is skewed to low complexity over residues 88–120 and 137–182; these read HPPS…MPVP and PTSQ…SPLH. Over residues 183–192 the composition is skewed to pro residues; sequence PIQPLPPQQA.

This sequence belongs to the amelogenin family.

It localises to the secreted. The protein localises to the extracellular space. It is found in the extracellular matrix. In terms of biological role, plays a role in the biomineralization of teeth. Seems to regulate the formation of crystallites during the secretory stage of tooth enamel development. Thought to play a major role in the structural organization and mineralization of developing enamel. This is Amelogenin (AMEL) from Cavia porcellus (Guinea pig).